Consider the following 834-residue polypeptide: DIS3-like exonuclease 2 (834 aa).

Residues 1–23 (MHNSEFLSPVQSGTQRGTNRSIL) are compositionally biased toward polar residues. Residues 1 to 35 (MHNSEFLSPVQSGTQRGTNRSILNNKKSGKGKKKS) are disordered. Mg(2+) contacts are provided by Asp-354 and Asp-363.

The protein belongs to the RNR ribonuclease family. DIS3L2 subfamily. The cofactor is Mg(2+). Requires Mn(2+) as cofactor.

The protein resides in the cytoplasm. It localises to the P-body. Functionally, 3'-5'-exoribonuclease that specifically recognizes RNAs polyuridylated at their 3' end and mediates their degradation. Component of an exosome-independent RNA degradation pathway that mediates degradation of both mRNAs and miRNAs that have been polyuridylated by a terminal uridylyltransferase. Essential for correct mitosis, and negatively regulates cell proliferation. The chain is DIS3-like exonuclease 2 from Xenopus tropicalis (Western clawed frog).